Reading from the N-terminus, the 422-residue chain is Phosphoserine aminotransferase 2, chloroplastic (422 aa).

The transit peptide at 1–50 (MAASTNSFLIGNQTQIPSLKPKSISQSFIHFTKPNTINLTTRTKSVSIRC) directs the protein to the chloroplast. Residue Ala51 is modified to N-acetylalanine. Arg101 lines the L-glutamate pocket. Residues 135-136 (AT), Trp161, Thr211, Asp233, and Gln256 each bind pyridoxal 5'-phosphate. Lys257 bears the N6-(pyridoxal phosphate)lysine mark. 298-299 (NT) contributes to the pyridoxal 5'-phosphate binding site.

Belongs to the class-V pyridoxal-phosphate-dependent aminotransferase family. SerC subfamily. It depends on pyridoxal 5'-phosphate as a cofactor.

It localises to the plastid. The protein resides in the chloroplast. The catalysed reaction is O-phospho-L-serine + 2-oxoglutarate = 3-phosphooxypyruvate + L-glutamate. It catalyses the reaction 4-(phosphooxy)-L-threonine + 2-oxoglutarate = (R)-3-hydroxy-2-oxo-4-phosphooxybutanoate + L-glutamate. Its pathway is amino-acid biosynthesis; L-serine biosynthesis; L-serine from 3-phospho-D-glycerate: step 2/3. Involved in the plastidial phosphorylated pathway of serine biosynthesis (PPSB). Catalyzes the reversible conversion of 3-phosphohydroxypyruvate to phosphoserine. The chain is Phosphoserine aminotransferase 2, chloroplastic (PSAT2) from Arabidopsis thaliana (Mouse-ear cress).